Reading from the N-terminus, the 326-residue chain is MARKNLLAGLVDTAEIPHADVAPAYPMRGASKSMVRSLDELSRQAEKFLEGETVVELDPETLDGSFVSDRMGDSSEQFEELKQAIAERGQDTPILVRPHPSAADRYQIVFGHRRARVARELGRKVKAVVKALDDRTHVIAQGQENSARANLSFIERANFASHLEKLGYDRTIIGSALAANAAAISKMIAVIDRIPEETIARIGPCPAVGRERWVELSLLVGKTANEAKVKAIVSDPSFNELSTDDRFNSLFSGLNSAAKPVRKTTPKILENWQPADKTVSAKYSNSAKAFALSMKSRNAGPFGRYIADNLDRLYAEFLEQGNRKED.

This sequence belongs to the ParB family.

This Sinorhizobium fredii (strain NBRC 101917 / NGR234) protein is Putative replication protein B.